Reading from the N-terminus, the 416-residue chain is Signal recognition particle receptor FtsY (416 aa).

Positions methionine 1–lysine 10 are enriched in basic residues. Residues methionine 1–threonine 24 are disordered. Residues glycine 224–threonine 231, aspartate 304–arginine 308, and threonine 368–aspartate 371 contribute to the GTP site.

It belongs to the GTP-binding SRP family. FtsY subfamily. Part of the signal recognition particle protein translocation system, which is composed of SRP and FtsY. SRP is a ribonucleoprotein composed of Ffh and a 4.5S RNA molecule. It depends on Mg(2+) as a cofactor.

It is found in the cell membrane. Its subcellular location is the cytoplasm. The catalysed reaction is GTP + H2O = GDP + phosphate + H(+). Involved in targeting and insertion of nascent membrane proteins into the cytoplasmic membrane. Acts as a receptor for the complex formed by the signal recognition particle (SRP) and the ribosome-nascent chain (RNC). Interaction with SRP-RNC leads to the transfer of the RNC complex to the Sec translocase for insertion into the membrane, the hydrolysis of GTP by both Ffh and FtsY, and the dissociation of the SRP-FtsY complex into the individual components. The chain is Signal recognition particle receptor FtsY from Neisseria gonorrhoeae.